Reading from the N-terminus, the 726-residue chain is Type VI secretion system spike protein VgrG1c (726 aa).

Residues 502–522 (ANATQSGTKSRSSKGGTPANF) form a disordered region. The segment covering 507 to 518 (SGTKSRSSKGGT) has biased composition (low complexity).

The protein belongs to the VgrG protein family. Forms homomultimers. Part of the type VI secretion system (T6SS).

The protein localises to the secreted. Its function is as follows. Part of the H1 type VI secretion system (H1-T6SS) specialized secretion system, which delivers several virulence factors in both prokaryotic and eukaryotic cells during infection. Allows the delivery of the Tse5/RhsP1 toxin to target cells where it exerts its toxicity. This Pseudomonas aeruginosa (strain ATCC 15692 / DSM 22644 / CIP 104116 / JCM 14847 / LMG 12228 / 1C / PRS 101 / PAO1) protein is Type VI secretion system spike protein VgrG1c.